A 299-amino-acid polypeptide reads, in one-letter code: Porphobilinogen deaminase (299 aa).

C234 is subject to S-(dipyrrolylmethanemethyl)cysteine.

It belongs to the HMBS family. As to quaternary structure, monomer. Dipyrromethane is required as a cofactor.

The enzyme catalyses 4 porphobilinogen + H2O = hydroxymethylbilane + 4 NH4(+). It functions in the pathway porphyrin-containing compound metabolism; protoporphyrin-IX biosynthesis; coproporphyrinogen-III from 5-aminolevulinate: step 2/4. Functionally, tetrapolymerization of the monopyrrole PBG into the hydroxymethylbilane pre-uroporphyrinogen in several discrete steps. The protein is Porphobilinogen deaminase of Corynebacterium efficiens (strain DSM 44549 / YS-314 / AJ 12310 / JCM 11189 / NBRC 100395).